A 213-amino-acid polypeptide reads, in one-letter code: LexA repressor 2 (213 aa).

The segment at residues 27–47 is a DNA-binding region (H-T-H motif); sequence QTEIARAFGFKGVRAAQYHLE. Catalysis depends on for autocatalytic cleavage activity residues Ser133 and Lys170.

The protein belongs to the peptidase S24 family. Homodimer.

It carries out the reaction Hydrolysis of Ala-|-Gly bond in repressor LexA.. In terms of biological role, represses a number of genes involved in the response to DNA damage (SOS response), including recA and lexA. In the presence of single-stranded DNA, RecA interacts with LexA causing an autocatalytic cleavage which disrupts the DNA-binding part of LexA, leading to derepression of the SOS regulon and eventually DNA repair. The chain is LexA repressor 2 from Xanthomonas campestris pv. campestris (strain ATCC 33913 / DSM 3586 / NCPPB 528 / LMG 568 / P 25).